A 350-amino-acid chain; its full sequence is Methionine import ATP-binding protein MetN (350 aa).

In terms of domain architecture, ABC transporter spans Ile-2–Val-241. Position 38-45 (Gly-38–Ser-45) interacts with ATP.

Belongs to the ABC transporter superfamily. Methionine importer (TC 3.A.1.24) family. The complex is composed of two ATP-binding proteins (MetN), two transmembrane proteins (MetI) and a solute-binding protein (MetQ).

It localises to the cell inner membrane. It catalyses the reaction L-methionine(out) + ATP + H2O = L-methionine(in) + ADP + phosphate + H(+). It carries out the reaction D-methionine(out) + ATP + H2O = D-methionine(in) + ADP + phosphate + H(+). Its function is as follows. Part of the ABC transporter complex MetNIQ involved in methionine import. Responsible for energy coupling to the transport system. In Francisella tularensis subsp. tularensis (strain SCHU S4 / Schu 4), this protein is Methionine import ATP-binding protein MetN.